The chain runs to 279 residues: 5'-nucleotidase SurE (279 aa).

Residues D28, D29, S59, and N113 each coordinate a divalent metal cation.

The protein belongs to the SurE nucleotidase family. Requires a divalent metal cation as cofactor.

Its subcellular location is the cytoplasm. The enzyme catalyses a ribonucleoside 5'-phosphate + H2O = a ribonucleoside + phosphate. Nucleotidase that shows phosphatase activity on nucleoside 5'-monophosphates. The polypeptide is 5'-nucleotidase SurE (Methanospirillum hungatei JF-1 (strain ATCC 27890 / DSM 864 / NBRC 100397 / JF-1)).